Consider the following 380-residue polypeptide: Apelin receptor (380 aa).

Residues 1–30 (MEEGGDFDNYYGADNQSECEYTDWKSSGAL) lie on the Extracellular side of the membrane. Residue asparagine 15 is glycosylated (N-linked (GlcNAc...) asparagine). 2 disulfides stabilise this stretch: cysteine 19–cysteine 281 and cysteine 102–cysteine 181. The chain crosses the membrane as a helical span at residues 31 to 54 (IPAIYMLVFLLGTTGNGLVLWTVF). The Cytoplasmic portion of the chain corresponds to 55–64 (RSSREKRRSA). The chain crosses the membrane as a helical span at residues 65–86 (DIFIASLAVADLTFVVTLPLWA). The Extracellular segment spans residues 87–99 (TYTYRDYDWPFGT). Residues 100-125 (FSCKLSSYLIFVNMYASVFCLTGLSF) form a helical membrane-spanning segment. Residues 126 to 146 (DRYLAIVRPVANARLRLRVSG) are Cytoplasmic-facing. A helical membrane pass occupies residues 147–164 (AVATAVLWVLAALLAMPV). At 165–198 (MVFRTTGDLENTTKVQCYMDYSMVATVSSDWAWE) the chain is on the extracellular side. Residue asparagine 175 is glycosylated (N-linked (GlcNAc...) asparagine). Residues 199–223 (VGLGVSSTTVGFVVPFTIMLTCYFF) form a helical membrane-spanning segment. Residues 224–246 (IAQTIAGHFRKERIEGLRKRRRL) are Cytoplasmic-facing. The chain crosses the membrane as a helical span at residues 247–270 (LSIIVVLVVTFALCWMPYHLVKTL). The Extracellular portion of the chain corresponds to 271 to 289 (YMLGSLLHWPCDFDLFLMN). A helical transmembrane segment spans residues 290–312 (VFPYCTCISYVNSCLNPFLYAFF). Residues 313 to 380 (DPRFRQACTS…PYSQETLVVD (68 aa)) lie on the Cytoplasmic side of the membrane. Positions 342–351 (KSASYSSGHS) are enriched in low complexity. The tract at residues 342–380 (KSASYSSGHSQGPGPNMGKGGEQMHEKSIPYSQETLVVD) is disordered. The segment covering 371–380 (PYSQETLVVD) has biased composition (polar residues).

This sequence belongs to the G-protein coupled receptor 1 family. As to quaternary structure, homodimer; dimerization inhibits APLNR-mediated G protein and beta-arrestin signaling pathways compared to monomeric APLNR.

It is found in the cell membrane. G protein-coupled receptor for peptide hormones apelin (APLN) and apelin receptor early endogenous ligand (APELA/ELA), that plays a role in the regulation of normal cardiovascular function and fluid homeostasis. When acting as apelin receptor, activates both G(i) protein pathway that inhibits adenylate cyclase activity, and the beta-arrestin pathway that promotes internalization of the receptor. APLNR/APJ also functions as mechanoreceptor that is activated by pathological stimuli in a G-protein-independent fashion to induce beta-arrestin signaling, hence eliciting cardiac hypertrophy. However, the presence of apelin ligand blunts cardiac hypertrophic induction from APLNR/APJ on response to pathological stimuli. Plays a key role in early development such as gastrulation, blood vessels formation and heart morphogenesis by acting as a APELA receptor. May promote angioblast migration toward the embryonic midline, i.e. the position of the future vessel formation, during vasculogenesis. Promotes sinus venosus (SV)-derived endothelial cells migration into the developing heart to promote coronary blood vessel development. Also plays a role in various processes in adults such as regulation of blood vessel formation, blood pressure, heart contractility and heart failure. Functionally, (Microbial infection) Alternative coreceptor with CD4 for HIV-1 infection; may be involved in the development of AIDS dementia. This chain is Apelin receptor (APLNR), found in Macaca mulatta (Rhesus macaque).